Here is a 502-residue protein sequence, read N- to C-terminus: MSFLTTPKMLSEYQCLKNIGFSHKTVLKRRLFRKECTPALKSFYSTQDPALNEVRTEKLKNGVTYVCDPRPGHFSGLGVYVKAGSRYETKKFSGVSHFMDRLAFQATERTPVGEMKAKLENLGGNYMCSTSRESMIYQAAVFNDDVKSMSKLLAETVLAPKIQEDDLVHYRDSIIYENSELWTKPDALLGEFAHVTAFQNNTLGNCLLCTPDKVNGITATSIREYLKYFYRPEHLTLAYAGIPQEIAKEITKELYGHLPSSSLPPLEAIPSHYTGGFMGIKKSEAPPVPYQQEFTHVVIAMEGLPVTDPDIYALACLQFLLGGGGSFSAGGPGKGMYSRLYLNVLNQYPWVETCMAFNHSYTDSGLFGMFVTILDDAAHLAAPLIIRELCNTVLSVTSEETERAKNQLKSSLLMNLESRMISLEDLGRQIQTQNGLYITPKEMIEKIDALTPSDLSRVARRVLTGNVSNPGNGTGKPTVLIHGNVDEVGDVFALCKKAGIGH.

This sequence belongs to the peptidase M16 family. In terms of assembly, heterodimer of mas2 (alpha) and mas1 (beta) subunits, forming the mitochondrial processing protease (MPP) in which mas2 is involved in substrate recognition and binding and mas1 is the catalytic subunit.

Its subcellular location is the mitochondrion matrix. Its function is as follows. Substrate recognition and binding subunit of the essential mitochondrial processing protease (MPP), which cleaves the mitochondrial sequence off newly imported precursors proteins. The polypeptide is Probable mitochondrial-processing peptidase subunit alpha (mas2) (Schizosaccharomyces pombe (strain 972 / ATCC 24843) (Fission yeast)).